The chain runs to 207 residues: Nitrile hydratase subunit alpha (207 aa).

Positions 110, 113, 114, and 115 each coordinate Fe(3+). Residue cysteine 113 is modified to Cysteine sulfinic acid (-SO2H). Cysteine sulfenic acid (-SOH) is present on cysteine 115.

It belongs to the nitrile hydratase subunit alpha family. Heterodimer of an alpha and a beta chain. Fe(3+) serves as cofactor. Oxidation on Cys-113 is essential for the activity. Post-translationally, oxidation on Cys-115 stabilizes the Fe-NO ligand coordinated in the inactive form.

It catalyses the reaction an aliphatic primary amide = an aliphatic nitrile + H2O. With respect to regulation, inactivated by nitrosylation of the iron center in the dark and activated by photo-induced nitric oxide (NO) release. Inactivated by oxidation of Cys-115 to a sulfenic acid. In terms of biological role, NHase catalyzes the hydration of various nitrile compounds to the corresponding amides. Industrial production of acrylamide is now being developed using some of the enzymes of this class. In Rhodococcus erythropolis (Arthrobacter picolinophilus), this protein is Nitrile hydratase subunit alpha (nthA).